Here is a 935-residue protein sequence, read N- to C-terminus: Intimin (935 aa).

The N-terminal stretch at 1 to 41 is a signal peptide; it reads MITHGFYARTRHKHKLKKTFIMLSAGLGLFFYVNQNSFANG. The segment at 40–153 is peptidoglycan-binding; the sequence is NGENYFKLSS…KMTKMSPDAT (114 aa). A sufficient for homodimerization region spans residues 40-153; it reads NGENYFKLSS…KMTKMSPDAT (114 aa). Residues 40 to 212 are required for periplasmic localization; the sequence is NGENYFKLSS…LQAWLQHYGT (173 aa). Positions 63-112 constitute a LysM domain; sequence LFYTLKTGETVSSISKSQGISLSVIWSLNKHLYSSESEMLKAAPGQQIIL. The tract at residues 210–411 is inverse autotransporter; sequence YGTAEVNLQS…LYSMQFRYQF (202 aa). The interval 402–411 is signature sequence for beta-barrel assembly machinery (BAM), which recognizes the unfolded beta-barrel in the periplasm; that stretch reads LYSMQFRYQF. 2 Big-1 domains span residues 560 to 653 and 660 to 754; these read VTDF…VIFV and ITEI…VTFF. A BIG2 domain is found at 790-834; it reads GGNGTYSWHSENTNIATVDESGKVTLKGKGTAVINVTSGDKQTVS. Residues C859 and C933 are joined by a disulfide bond.

This sequence belongs to the intimin/invasin family. As to quaternary structure, homodimer. Interacts with Tir.

Its subcellular location is the cell outer membrane. Functionally, an inverse autotransporter. Adhesin, which mediates attachment to the human intestine epithelial cells. Necessary for the production of attaching and effacing lesions on infected human tissue culture cells. Anchored to the outer membrane by binding to peptidoglycan (PGN) via its periplasmic domain, thus helping in receptor interactions during host invasion. PGN-binding may also aid in resisting mechanical and chemical stress during transit of the bacterium through the gastrointestinal tract of the host. This is Intimin (eae) from Escherichia coli O111:H-.